The following is a 75-amino-acid chain: Translational regulator CsrA (75 aa).

This sequence belongs to the CsrA/RsmA family. In terms of assembly, homodimer; the beta-strands of each monomer intercalate to form a hydrophobic core, while the alpha-helices form wings that extend away from the core. Interacts with FliW.

The protein localises to the cytoplasm. Functionally, a translational regulator that binds mRNA to regulate translation initiation and/or mRNA stability. Usually binds in the 5'-UTR at or near the Shine-Dalgarno sequence preventing ribosome-binding, thus repressing translation. Its function is probably anatagonized by FliW. Inhibits translation of flaA mRNA in vitro. Involved in post-transcriptional regulation of flagellin biosynthesis. This chain is Translational regulator CsrA, found in Campylobacter jejuni subsp. jejuni serotype O:6 (strain 81116 / NCTC 11828).